The following is an 88-amino-acid chain: Protein K3 (88 aa).

One can recognise an S1 motif domain in the interval 8–82; it reads LPNAGDVIKG…TKGYIDVNYK (75 aa). Binding to host EIF2AK2/PKR stretches follow at residues 43–53 and 74–79; these read SVKMHMDRYVE and KGYIDV.

The protein belongs to the orthopoxvirus OPG041 family. In terms of assembly, interacts with host EIF2AK2/PKR kinase.

In terms of biological role, viral mimic of eIF-2-alpha that acts as a pseudosubstrate for EIF2AK2/PKR kinase. Inhibits therefore eIF-2-alpha phosphorylation by host EIF2AK2/PKR kinase and prevents protein synthesis shutoff. Determinant of host species specificity. The polypeptide is Protein K3 (OPG041) (Homo sapiens (Human)).